Consider the following 802-residue polypeptide: Leucine--tRNA ligase (802 aa).

The 'HIGH' region signature appears at 40–51; sequence PYPSGAGLHVGH. The short motif at 576 to 580 is the 'KMSKS' region element; it reads KMSKS. Residue Lys-579 coordinates ATP.

The protein belongs to the class-I aminoacyl-tRNA synthetase family.

The protein localises to the cytoplasm. The enzyme catalyses tRNA(Leu) + L-leucine + ATP = L-leucyl-tRNA(Leu) + AMP + diphosphate. This is Leucine--tRNA ligase from Bacillus thuringiensis subsp. konkukian (strain 97-27).